A 36-amino-acid chain; its full sequence is MTDFSLPSILVPLVGLVLPAIAMASLSLHVQKNKIV.

The chain crosses the membrane as a helical span at residues 4–24 (FSLPSILVPLVGLVLPAIAMA).

It belongs to the PsaI family.

It is found in the plastid. The protein localises to the chloroplast thylakoid membrane. Functionally, may help in the organization of the PsaL subunit. In Piper cenocladum (Ant piper), this protein is Photosystem I reaction center subunit VIII.